Here is a 475-residue protein sequence, read N- to C-terminus: Putative aldehyde dehydrogenase SERP1729 (475 aa).

201–207 provides a ligand contact to NAD(+); sequence GDGSGVG. Catalysis depends on residues glutamate 245 and cysteine 279.

It belongs to the aldehyde dehydrogenase family.

The enzyme catalyses an aldehyde + NAD(+) + H2O = a carboxylate + NADH + 2 H(+). In Staphylococcus epidermidis (strain ATCC 35984 / DSM 28319 / BCRC 17069 / CCUG 31568 / BM 3577 / RP62A), this protein is Putative aldehyde dehydrogenase SERP1729.